The chain runs to 703 residues: MAQKHPGERRLCGAHRSGGTSLSTSGSSVDPEILSFSGLRDSAETAPNGTRCLKEHSGPKYTQPPNPAHWSDPSHGPPRGPGPPRGGGYPDESETGSEESGVDQELSRENETGYQEDGSPSFLSIPSACNCQGSPGVPEGTYSEEGDGSSSSLCHHCTSPALGEDEELEEEYDDEEPLKFPSDFSRVSSGKKPLSRRQKHRFLIKEDVRDSGRREPKAPGRHRLARKRSQTDKRRGLGLWGVEELCQLGQAGFWWLIELLVLVGEYVETCGHLIYACRKLKGSDLDLFRVWVGVWARRLGGWARMMFQFLSQSFFCVVGLLIRILRVVGAFLLLALALFLGCLQLGWRFSVGLGNRLGWRDKTAWLFSWLGSPALHHCLTLLKDSRPWQQLVRLIQWGWQELPWVKQRTKKQGNAPVASGRYCQPEEEVTRLLTMAGVPEDELNPFHVLGVEATASDTELKKAYRQLAVMVHPDKNHHPRAEEAFKILRAAWDIVSNPERRKEYEMKRMAENELSRSVNEFLSKLQDDLKEAMNTMMCSRCQGKHRRFEMDREPKSARYCAECNRLHPAEEGDFWAESSMLGLKITYFALMDGKVYDITEWAGCQRVGISPDTHRVPYHISFGSRVPGTSGRQRATPESPPADLQDFLSRIFQVPPGPMSNGNFFAAPHPGPGTTSTSRPNSSVPKGEAKPKRRKKVRRPFQR.

The segment covering 1–11 has biased composition (basic and acidic residues); it reads MAQKHPGERRL. Residues 1 to 229 are disordered; the sequence is MAQKHPGERR…GRHRLARKRS (229 aa). The segment covering 17 to 28 has biased composition (low complexity); that stretch reads SGGTSLSTSGSS. Positions 75-84 are enriched in pro residues; sequence HGPPRGPGPP. The segment covering 91 to 102 has biased composition (acidic residues); sequence DESETGSEESGV. The span at 121–133 shows a compositional bias: polar residues; that stretch reads SFLSIPSACNCQG. The segment covering 163–176 has biased composition (acidic residues); sequence GEDEELEEEYDDEE. A compositionally biased stretch (basic residues) spans 193–202; it reads PLSRRQKHRF. Basic and acidic residues predominate over residues 203–218; sequence LIKEDVRDSGRREPKA. Residues 219 to 228 are compositionally biased toward basic residues; the sequence is PGRHRLARKR. Helical transmembrane passes span 305-325 and 327-347; these read MMFQ…IRIL and VVGA…QLGW. The region spanning 444 to 508 is the J domain; that stretch reads NPFHVLGVEA…ERRKEYEMKR (65 aa). 2 disordered regions span residues 622-643 and 659-703; these read FGSR…PPAD and MSNG…PFQR. Residues 673–684 are compositionally biased toward polar residues; it reads GTTSTSRPNSSV. Basic residues predominate over residues 691–703; the sequence is PKRRKKVRRPFQR.

As to quaternary structure, interacts with the FxxxFxxxF motif of DRD1 via its C-terminal domain.

The protein localises to the endoplasmic reticulum membrane. Regulates the export of target proteins, such as DRD1, from the endoplasmic reticulum to the cell surface. The sequence is that of DnaJ homolog subfamily C member 14 (Dnajc14) from Mus musculus (Mouse).